The sequence spans 162 residues: Podoplanin (162 aa).

Positions 1 to 22 are cleaved as a signal peptide; the sequence is MWKVSALLFVLGSASLWVLAEG. Residues 23–57 are disordered; that stretch reads ASTGQPEDDTETTGLEGGVAMPGAEDDVVTPGTSE. The Extracellular segment spans residues 23-131; the sequence is ASTGQPEDDT…EKDGLSTVTL (109 aa). O-linked (GalNAc...) threonine glycans are attached at residues Thr-25, Thr-32, Thr-34, Thr-35, Thr-52, Thr-55, Thr-65, Thr-66, Thr-76, and Thr-85. The segment covering 85-108 has biased composition (polar residues); that stretch reads TSESTVHAQEQSPSATASNVATSH. The disordered stretch occupies residues 85 to 119; sequence TSESTVHAQEQSPSATASNVATSHSTEKVDGDTQT. Ser-86 and Ser-88 each carry an O-linked (GalNAc...) serine glycan. The O-linked (GalNAc...) threonine glycan is linked to Thr-89. Residues Ser-96 and Ser-98 are each glycosylated (O-linked (GalNAc...) serine). Thr-100 carries O-linked (GalNAc...) threonine glycosylation. An O-linked (GalNAc...) serine glycan is attached at Ser-102. Residue Thr-106 is glycosylated (O-linked (GalNAc...) threonine). O-linked (GalNAc...) serine glycosylation is found at Ser-107 and Ser-109. Over residues 109–119 the composition is skewed to basic and acidic residues; it reads STEKVDGDTQT. O-linked (GalNAc...) threonine glycans are attached at residues Thr-110, Thr-117, Thr-119, and Thr-120. Residues 132-152 traverse the membrane as a helical segment; sequence VGIIVGVLLAIGFIGAIIVVV. The tract at residues 133-137 is requires for dimerization and lipid rafts association; the sequence is GIIVG. Residues 153–162 are Cytoplasmic-facing; that stretch reads MRKMSGRYSP. The tract at residues 154–155 is requires for interaction with MSN and EZR; it reads RK.

This sequence belongs to the podoplanin family. In terms of assembly, homodimer. Interacts with CLEC1B; the interaction is independent of CLEC1B glycosylation and activates CLEC1B; the interaction is dependent of sialic acid on O-glycans. Interacts with CD9; this interaction is homophilic and attenuates platelet aggregation and pulmonary metastasis induced by PDPN. Interacts with LGALS8; the interaction is glycosylation-dependent; may participate in connection of the lymphatic endothelium to the surrounding extracellular matrix. Interacts with HSPA9. Interacts (via extracellular domain) with CD44; this interaction is required for PDPN-mediated directional migration and regulation of lamellipodia extension/stabilization during cell spreading and migration. Interacts (via cytoplasmic domain) with MSN and EZR; activates RHOA and promotes epithelial-mesenchymal transition. Interacts with CCL21; relocalized PDPN to the basolateral membrane. Post-translationally, extensively O-glycosylated. Contains sialic acid residues. O-glycosylation is necessary for platelet aggregation activity. Disialylated at Thr-52; sialic acid is critical for platelet-aggregating activity and for CLEC1B interaction. The N-terminus is blocked. In terms of processing, cleaved by a metalloprotease within its extracellular (EC) domain, generating a membrane-bound C-terminal fragment (PCTF33) and an extracellular fragment. The resulting membrane-bound C-terminal fragment (PCTF33) is further processed between Val-150 and Val-151 by PSEN1/gamma-secretase generating the intracellular domain of podoplanin (PICD). As to expression, highly expressed in placenta, lung, skeletal muscle and brain. Weakly expressed in brain, kidney and liver. In placenta, expressed on the apical plasma membrane of endothelium. In lung, expressed in alveolar epithelium. Up-regulated in colorectal tumors and expressed in 25% of early oral squamous cell carcinomas.

The protein localises to the membrane. Its subcellular location is the cell projection. It is found in the lamellipodium membrane. It localises to the filopodium membrane. The protein resides in the microvillus membrane. The protein localises to the ruffle membrane. Its subcellular location is the membrane raft. It is found in the apical cell membrane. It localises to the basolateral cell membrane. The protein resides in the invadopodium. The protein localises to the cytoplasm. Its subcellular location is the cytosol. Mediates effects on cell migration and adhesion through its different partners. During development plays a role in blood and lymphatic vessels separation by binding CLEC1B, triggering CLEC1B activation in platelets and leading to platelet activation and/or aggregation. Interaction with CD9, on the contrary, attenuates platelet aggregation induced by PDPN. Through MSN or EZR interaction promotes epithelial-mesenchymal transition (EMT) leading to ERZ phosphorylation and triggering RHOA activation leading to cell migration increase and invasiveness. Interaction with CD44 promotes directional cell migration in epithelial and tumor cells. In lymph nodes (LNs), controls fibroblastic reticular cells (FRCs) adhesion to the extracellular matrix (ECM) and contraction of the actomyosin by maintaining ERM proteins (EZR; MSN and RDX) and MYL9 activation through association with unknown transmembrane proteins. Engagement of CLEC1B by PDPN promotes FRCs relaxation by blocking lateral membrane interactions leading to reduction of ERM proteins (EZR; MSN and RDX) and MYL9 activation. Through binding with LGALS8 may participate in connection of the lymphatic endothelium to the surrounding extracellular matrix. In keratinocytes, induces changes in cell morphology showing an elongated shape, numerous membrane protrusions, major reorganization of the actin cytoskeleton, increased motility and decreased cell adhesion. Controls invadopodia stability and maturation leading to efficient degradation of the extracellular matrix (ECM) in tumor cells through modulation of RHOC activity in order to activate ROCK1/ROCK2 and LIMK1/LIMK2 and inactivation of CFL1. Required for normal lung cell proliferation and alveolus formation at birth. Does not function as a water channel or as a regulator of aquaporin-type water channels. Does not have any effect on folic acid or amino acid transport. The sequence is that of Podoplanin from Homo sapiens (Human).